The chain runs to 247 residues: Geranylgeranylglyceryl phosphate synthase (247 aa).

Residues aspartate 24 and serine 53 each contribute to the Mg(2+) site. Sn-glycerol 1-phosphate contacts are provided by residues 172–178 (YLEAGSG), 203–204 (GG), and 225–226 (GT).

The protein belongs to the GGGP/HepGP synthase family. Group II subfamily. Requires Mg(2+) as cofactor.

It localises to the cytoplasm. The enzyme catalyses sn-glycerol 1-phosphate + (2E,6E,10E)-geranylgeranyl diphosphate = sn-3-O-(geranylgeranyl)glycerol 1-phosphate + diphosphate. Its pathway is membrane lipid metabolism; glycerophospholipid metabolism. Prenyltransferase that catalyzes the transfer of the geranylgeranyl moiety of geranylgeranyl diphosphate (GGPP) to the C3 hydroxyl of sn-glycerol-1-phosphate (G1P). This reaction is the first ether-bond-formation step in the biosynthesis of archaeal membrane lipids. This Cenarchaeum symbiosum (strain A) protein is Geranylgeranylglyceryl phosphate synthase.